We begin with the raw amino-acid sequence, 443 residues long: Frizzled/smoothened-like sans CRD protein E (443 aa).

An N-terminal signal peptide occupies residues 1 to 23; the sequence is MISHIKKFINLYTIVFLLYILYS. The Extracellular portion of the chain corresponds to 24-83; that stretch reads NENFFVKGQKLPPGFCPSPLIYRNTTDRQSDIDIGFQFLGETNCVQPCPSLILTENEWNK. N-linked (GlcNAc...) asparagine glycosylation occurs at Asn-47. Residues 84–104 form a helical membrane-spanning segment; sequence VFNMSLVAGTISMFALIFLII. At 105–120 the chain is on the cytoplasmic side; sequence TYSPLVNNIKDYTRHT. The helical transmembrane segment at 121–141 threads the bilayer; the sequence is VGILFLFSGILIAMTTDGRQL. The Extracellular portion of the chain corresponds to 142–166; it reads WDIDLGFKKYCPEPGRFARQSDSKC. A helical membrane pass occupies residues 167–187; that stretch reads LVTAIFFQFGCVTALLWWAAI. The Cytoplasmic segment spans residues 188–203; that stretch reads SVDLWITIKKIKISKK. A helical transmembrane segment spans residues 204–224; it reads LFIIYTIAVNIVTIVLTFGPV. The Extracellular portion of the chain corresponds to 225–248; it reads GSKQYGYIDAAIGCWLMDLKYQVG. Residues 249–269 traverse the membrane as a helical segment; it reads YFWAPVGFCLCVGCVSIVLIL. Over 270 to 289 the chain is Cytoplasmic; the sequence is KEIYNVSDAVKKKLLAKHLK. The chain crosses the membrane as a helical span at residues 290 to 310; that stretch reads PLMLIILMLTEFIYMFIFYSY. Topologically, residues 311–350 are extracellular; that stretch reads TTSKKNHYHDIIEEYVVCLFVHAANPSVCKIGSTISPSAH. Residues 351–371 traverse the membrane as a helical segment; the sequence is FFFHLCIRLMGLEVLIFYGFT. The Cytoplasmic segment spans residues 372-443; the sequence is RQTRKIWMRS…SGIDDSKHDP (72 aa). 2 stretches are compositionally biased toward low complexity: residues 397–410 and 419–432; these read SSSNDSKSSNNKTS and ESSEQSNEPEQSIE. The tract at residues 397–443 is disordered; sequence SSSNDSKSSNNKTSGRVTGGFGESSEQSNEPEQSIELSGIDDSKHDP.

This sequence belongs to the G-protein coupled receptor Fz/Smo family.

It is found in the membrane. The chain is Frizzled/smoothened-like sans CRD protein E (fscE) from Dictyostelium discoideum (Social amoeba).